The following is a 115-amino-acid chain: Replication initiation control protein YabA (115 aa).

Residues His90, Cys92, Cys106, and Cys109 each coordinate Zn(2+).

It belongs to the YabA family. Homotetramer. Interacts with both DnaA and DnaN, acting as a bridge between these two proteins. It depends on Zn(2+) as a cofactor.

Its subcellular location is the cytoplasm. The protein localises to the nucleoid. Involved in control of chromosome replication initiation. Inhibits the cooperative binding of DnaA to the oriC region, thus negatively regulating initiation of chromosome replication. Inhibits the ability of DnaA-ATP to form a helix on DNA; does not disassemble preformed DnaA-DNA helices. Decreases the residence time of DnaA on the chromosome at its binding sites (oriC, replication forks and promoter-binding sites). Tethers DnaA to the replication machinery via the DNA polymerase beta sliding clamp subunit (dnaN). Associates with oriC and other DnaA targets on the chromosome in a DnaA-dependent manner. In Staphylococcus aureus (strain bovine RF122 / ET3-1), this protein is Replication initiation control protein YabA.